Here is a 2138-residue protein sequence, read N- to C-terminus: MVRSEPCVLFAQTFVHPQLDEYVDEVIFAEPVIITACEFLEQNASSSSQAVSLVGATSPPSFALEVFVRCEGESKFKRLCNPFLYTPSAPYPLEVEAVVTNHLVVRGSYRSLSLIVYGNIVKDLGQYNIILEGRSVTDIVSSTEGNLEDLPLVLHSVNRTIEECLSSLDIVSLPLAAVDLPVEVKRLLQLLLKIFDKLATNDVVNKFVDTVVSGVSSYVTDNVDFFLKNKNCSAVTSSLDSGLFHDIVDRVKEDILDLNEIQESDVALGLFSFLESETYLATSQQLVVMLSPYIQFERDSLCTVLPKLSKGKATLLGLSLAFLLCSGREGCLQFVNSGGMDQLVYLFGHDGQNSTTITLLLLGVVEQATRHSVGCEGFLGWWPREDGSIPSGKSEGYCLLLKLLMQKPCHEIASLAIYILRRLRIYEVISRYEFAVLSALEGLSNSHGAATHNLNMLSDAKSQLQKLQNLMKSLGSVEDPSPSAYAERSLVSDHSEGWLSYKATSKLTSSWTCPFYSSGIDSHILALLKERGFLPLSAALLSMPELHSKVGDIMDVFTDIAMFIGNIILSFMFSRTGLSFLLHHPELTATIIQSLKGSVDLNKEECVPLHYASILISKGFTCSLLEIGINLEMHLRVVSAVDRLLKSIQQTEEFLWILWELRDVSRSDCGREALLTLGVFPEALAVLIEALHSAKDMEPAVENSGISPLNLAICHSAAEIFEVIVSDSTASCLHAWIEHAPVLHKALHTLSPGGSNRKDAPSRLLKWIDAGVVYHKHGVGGLLRYAAVLASGGDAQLSSSSILALDLTPAENGAGESTNVSEMNVLDNLGKVIFEKSFEGVNLSDSSISQLTTALRILALISDNSTVAAALYDEGAVTVVYAILVNCSFMFERSSNIYDYLVDDDHGCSSISDFLSERNREQSLVDLLIPSLVLLISVLQRLQGTKEQYRNTKLMKALLRLHREVSPKLAACAADLSSHYPDSALGFGAVCHLIVSALVCWPVYGWIPGLFHTLLSGVQTSSVPALGPKETCSFLCILSDILPEEGVWFWKSGMPLLSGLRKLAVGTLMGPQKEKQINWYLEPGPLEKLINHLTPNLDKIAKIIQHHAVSALVVIQDMLRVFIVRIACQRVEHASILLRPIFSSIRDGILDQSSTRDTEAYMVYRYLNFLASLLEHPHAKGLLLEEGIVQLLVEVLERCYDATYPSENRVLEYGIVSASSVIQWCIPAFRSISLLCDSQVPLLCFQKKELLASLSAKDCALIFPFVLKFCQVLPVGNELLSCLGAFKDLSSCGEGQDGLVSLLFHLFSGTEESVSERWCDTNSLSLDQLDMKKNPPFLSCWIKLLNSINSKDGLSSLAMKAVNVLSVGSIRLCLDGKSLDSKKVAALKSLFGLPSEFSGTDTFREENIGLIEQMVTLLSSMTSGSDSSATAEMKPYLHEASQSLLSLLKDGNIDDIISCKGVFVSPGNLDMDDLVSRNIEDDLYQRGLEDKFWWECPETLPERLPQSSLPAKRKLPTLESSSRRAKGENSSVDIPTQNSIQRGMGSVSLPPAPTRRDAFRQRKPNTSRPPSMHVDDYVARERSVDTAGNSNAITISRAGSSSGRPPSIHVDEFMARQRERGQNPSTIVVGEAVVQVKNPTPARDTEKVAGKPKQFKADPDDDLQGIDIVFDGEECEGPDDKLPFLQPDENLMQPAPVMVEQNSPHSIVEETESDANGSSQFSHMGTPVASNVDENAQSEFSSRISVSRPEMSLIREPSISSDRKFVEQADEAKKMAPLKSAGISESGFIPAYHMPGSSGQNSIDPRVGPQGFYSKSGQQHTGHIHGGFSGRGVYEQKVMPNQPPLPLVPPPSVSPVIPHSSDSLSNQSSPFISHGTQSSGGPTRLMPPLPSAIPQYSSNPYASLPPRTSTVQSFGYNHAGVGTTEQQQSGPTIDHQSGNLSVTGMTSYPPPNLMPSHNFSRPSSLPVPFYGNPSHQGGDKPQTMLLVPSIPQSLNTQSIPQLPSMQLSQLQRPMQPPQHVRPPIQISQPSEQGVSMQNPFQIPMHQMQLMQQTQVQPYYHPPQQQEISQVQQQQQHHAVQGQQGAGTSQQQESGMSLHDYFKSPEAIQALLSDRDKLCQLLEQHPKLMQMLQEKLGQL.

5 disordered regions span residues 1503 to 1574 (RLPQ…SMHV), 1638 to 1664 (NPTPARDTEKVAGKPKQFKADPDDDLQ), 1855 to 1881 (PVIPHSSDSLSNQSSPFISHGTQSSGG), 2013 to 2035 (PMQPPQHVRPPIQISQPSEQGVS), and 2058 to 2094 (YYHPPQQQEISQVQQQQQHHAVQGQQGAGTSQQQESG). Polar residues predominate over residues 1528-1541 (ENSSVDIPTQNSIQ). Composition is skewed to polar residues over residues 1862 to 1881 (DSLSNQSSPFISHGTQSSGG) and 2025 to 2035 (QISQPSEQGVS).

This sequence belongs to the vir family. In terms of assembly, interacts with MTB, FIP37 and HAKAI. Associates with MTA, MTB, FIP37 and HAKAI to form the m6A writer complex which is essential for adenosine methylation at specific mRNA sequences.

Its subcellular location is the nucleus speckle. The protein localises to the nucleus. It localises to the nucleoplasm. In terms of biological role, subunit of the N6-methyltransferase complex, a multiprotein complex that mediates N6-methyladenosine (m6A) methylation at the 5'-[AG]GAC-3' consensus sites of some mRNAs. Associates with MTA, MTB, FIP37 and HAKAI to form the m6A writer complex which is essential for adenosine methylation at specific mRNA sequences. N6-methyladenosine (m6A) plays a role in mRNA stability, processing, translation efficiency and editing. In Arabidopsis thaliana (Mouse-ear cress), this protein is Protein virilizer homolog.